Consider the following 286-residue polypeptide: MAVNILTLPAPAKLNLFLHIIGRRSDGYHNLQTVFQFLDYADTLKFYTAADDKFDLIDHDSHIPRDENLVWKALTALRKTYEEKGITQLPGCSIELIKRLPQGAGLGGGSSNAATALVGLNQLWGSHLNSTELQAIGRKLGADVPVFIHGHACFAEGIGDVFTNITPPTPWYLVVKPNVSISTAALFSHPKLERNCSPVTADNWQQQKVANVFEPVVCDLHTEVAMLRRALLEYAPTRLTGSGACLFSTFETRQAAKEAQQQVPKELCSFIAQGQNRSPLIQTLTQ.

Lys-13 is a catalytic residue. 101–111 (PQGAGLGGGSS) serves as a coordination point for ATP. Asp-143 is a catalytic residue.

It belongs to the GHMP kinase family. IspE subfamily.

It catalyses the reaction 4-CDP-2-C-methyl-D-erythritol + ATP = 4-CDP-2-C-methyl-D-erythritol 2-phosphate + ADP + H(+). Its pathway is isoprenoid biosynthesis; isopentenyl diphosphate biosynthesis via DXP pathway; isopentenyl diphosphate from 1-deoxy-D-xylulose 5-phosphate: step 3/6. Functionally, catalyzes the phosphorylation of the position 2 hydroxy group of 4-diphosphocytidyl-2C-methyl-D-erythritol. This chain is 4-diphosphocytidyl-2-C-methyl-D-erythritol kinase, found in Idiomarina loihiensis (strain ATCC BAA-735 / DSM 15497 / L2-TR).